The chain runs to 105 residues: U-scoloptoxin(10)-Sm3a (105 aa).

An N-terminal signal peptide occupies residues 1 to 23; the sequence is MYKFIFIFFTVFFLINIIEESXT.

Belongs to the scoloptoxin-10 family. In terms of processing, contains 3 disulfide bonds. In terms of tissue distribution, expressed by the venom gland.

The protein resides in the secreted. This Scolopendra morsitans (Tanzanian blue ringleg centipede) protein is U-scoloptoxin(10)-Sm3a.